The primary structure comprises 205 residues: ATP-dependent Clp protease proteolytic subunit (205 aa).

Ser-98 functions as the Nucleophile in the catalytic mechanism. His-123 is a catalytic residue.

It belongs to the peptidase S14 family. As to quaternary structure, fourteen ClpP subunits assemble into 2 heptameric rings which stack back to back to give a disk-like structure with a central cavity, resembling the structure of eukaryotic proteasomes.

It localises to the cytoplasm. It catalyses the reaction Hydrolysis of proteins to small peptides in the presence of ATP and magnesium. alpha-casein is the usual test substrate. In the absence of ATP, only oligopeptides shorter than five residues are hydrolyzed (such as succinyl-Leu-Tyr-|-NHMec, and Leu-Tyr-Leu-|-Tyr-Trp, in which cleavage of the -Tyr-|-Leu- and -Tyr-|-Trp bonds also occurs).. Its function is as follows. Cleaves peptides in various proteins in a process that requires ATP hydrolysis. Has a chymotrypsin-like activity. Plays a major role in the degradation of misfolded proteins. The sequence is that of ATP-dependent Clp protease proteolytic subunit from Desulfosudis oleivorans (strain DSM 6200 / JCM 39069 / Hxd3) (Desulfococcus oleovorans).